Reading from the N-terminus, the 254-residue chain is Phosphonates import ATP-binding protein PhnC 2 (254 aa).

In terms of domain architecture, ABC transporter spans 4–248 (LEVNNLGKHY…KIESIYGFQQ (245 aa)). 37–44 (GPSGAGKS) contributes to the ATP binding site.

The protein belongs to the ABC transporter superfamily. Phosphonates importer (TC 3.A.1.9.1) family. In terms of assembly, the complex is composed of two ATP-binding proteins (PhnC), two transmembrane proteins (PhnE) and a solute-binding protein (PhnD).

The protein resides in the cell membrane. The enzyme catalyses phosphonate(out) + ATP + H2O = phosphonate(in) + ADP + phosphate + H(+). Functionally, part of the ABC transporter complex PhnCDE involved in phosphonates import. Responsible for energy coupling to the transport system. In Oceanobacillus iheyensis (strain DSM 14371 / CIP 107618 / JCM 11309 / KCTC 3954 / HTE831), this protein is Phosphonates import ATP-binding protein PhnC 2.